Consider the following 220-residue polypeptide: Uracil-DNA glycosylase (220 aa).

Aspartate 61 acts as the Proton acceptor in catalysis.

This sequence belongs to the uracil-DNA glycosylase (UDG) superfamily. UNG family.

The protein resides in the cytoplasm. It catalyses the reaction Hydrolyzes single-stranded DNA or mismatched double-stranded DNA and polynucleotides, releasing free uracil.. Excises uracil residues from the DNA which can arise as a result of misincorporation of dUMP residues by DNA polymerase or due to deamination of cytosine. The sequence is that of Uracil-DNA glycosylase from Glaesserella parasuis serovar 5 (strain SH0165) (Haemophilus parasuis).